An 838-amino-acid chain; its full sequence is Phosphatidylethanolamine N-methyltransferase 1 (838 aa).

Residues 1–48 (MATEIITEKKEIVARTRSSGITFNPPVTHDMVRSLFDPTIKKSFLECC) lie on the Lumenal side of the membrane. Residues 49–69 (ITLTILANFVLCYYLINWFGL) form a helical membrane-spanning segment. The Cytoplasmic segment spans residues 70-73 (SQAK). A helical membrane pass occupies residues 74-94 (LIFLIQYVYWRLAYNLGIGII). At 95 to 157 (LHYQSHYESL…ELNCWLLFRQ (63 aa)) the chain is on the lumenal side. Residues 158 to 178 (FVDLILMQDFTTYIIYVYLSL) traverse the membrane as a helical segment. The Cytoplasmic portion of the chain corresponds to 179–184 (PTDVSS). Residues 185–205 (LINWKSLIGIAMILFNIWVKI) form a helical membrane-spanning segment. Residues 206–236 (DAHRVVKDYAWYWGDFFFLQDAELTFDGVFN) are Lumenal-facing. Residues 237 to 257 (ISPHPMYSIGYLGYYGLSLIC) form a helical membrane-spanning segment. The Cytoplasmic segment spans residues 258–261 (GDYR). The chain crosses the membrane as a helical span at residues 262–282 (VLLVSVGGHFLQFLFLKYVES). Topologically, residues 283 to 328 (PHIERTYGSDSPSNSTQHQIDDLIAKENYDYSRPLINTGILFENFQ) are lumenal. Residues 329-349 (FLRFSDYFTVSTILVLFSWFF) traverse the membrane as a helical segment. Topologically, residues 350 to 356 (TSKPSNN) are cytoplasmic. A helical membrane pass occupies residues 357-377 (FLFVLTLLTKLTTWLLTSWIL). Topologically, residues 378-403 (FQQSNRKWFTRLFLKNGYTQIYSYQQ) are lumenal. Residues 404-424 (WQFLYNYSLIVTNTLLFLHTL) form a helical membrane-spanning segment. The Cytoplasmic portion of the chain corresponds to 425 to 435 (SELYSIQSSDG). Residues 436–456 (LNNSHVIFGLLLCAIQIWCNV) form a helical membrane-spanning segment. The Lumenal segment spans residues 457–517 (ETRDAISDFG…VLMTNFSKTN (61 aa)). A helical transmembrane segment spans residues 518–538 (VTLAVLWTVTNLIFVKLIEEP). Over 539–838 (HVSKVYGNGT…DIKEVLDSLN (300 aa)) the chain is Cytoplasmic.

This sequence belongs to the class VI-like SAM-binding methyltransferase superfamily. CHO2 family.

It localises to the endoplasmic reticulum membrane. It catalyses the reaction a 1,2-diacyl-sn-glycero-3-phosphoethanolamine + S-adenosyl-L-methionine = a 1,2-diacyl-sn-glycero-3-phospho-N-methylethanolamine + S-adenosyl-L-homocysteine + H(+). Its pathway is phospholipid metabolism; phosphatidylcholine biosynthesis. In terms of biological role, catalyzes the first step of the methylation pathway of phosphatidylcholine biosynthesis, the SAM-dependent methylation of phosphatidylethanolamine (PE) to phosphatidylmonomethylethanolamine (PMME). In Vanderwaltozyma polyspora (strain ATCC 22028 / DSM 70294 / BCRC 21397 / CBS 2163 / NBRC 10782 / NRRL Y-8283 / UCD 57-17) (Kluyveromyces polysporus), this protein is Phosphatidylethanolamine N-methyltransferase 1 (CHO2-1).